The primary structure comprises 200 residues: Recombination protein RecR (200 aa).

A C4-type zinc finger spans residues cysteine 60–cysteine 75. A Toprim domain is found at threonine 83–proline 177.

It belongs to the RecR family.

Its function is as follows. May play a role in DNA repair. It seems to be involved in an RecBC-independent recombinational process of DNA repair. It may act with RecF and RecO. This chain is Recombination protein RecR, found in Francisella tularensis subsp. novicida (strain U112).